A 210-amino-acid chain; its full sequence is Large ribosomal subunit protein bL25 (210 aa).

Residues 1 to 23 (MSDIGTLSAKGRDRAGKGAARAT) are disordered.

The protein belongs to the bacterial ribosomal protein bL25 family. CTC subfamily. In terms of assembly, part of the 50S ribosomal subunit; part of the 5S rRNA/L5/L18/L25 subcomplex. Contacts the 5S rRNA. Binds to the 5S rRNA independently of L5 and L18.

Functionally, this is one of the proteins that binds to the 5S RNA in the ribosome where it forms part of the central protuberance. The polypeptide is Large ribosomal subunit protein bL25 (Rhodospirillum rubrum (strain ATCC 11170 / ATH 1.1.1 / DSM 467 / LMG 4362 / NCIMB 8255 / S1)).